The following is a 415-amino-acid chain: Putative F-box/FBD/LRR-repeat protein At3g49040 (415 aa).

In terms of domain architecture, F-box spans Glu10–Lys58. LRR repeat units follow at residues His60–Phe86, Ser87–Leu114, Thr143–Lys170, Val171–Arg196, and Arg213–Arg241. Residues Ile272–Thr377 form the FBD domain.

The chain is Putative F-box/FBD/LRR-repeat protein At3g49040 from Arabidopsis thaliana (Mouse-ear cress).